We begin with the raw amino-acid sequence, 769 residues long: Gephyrin (769 aa).

An MPT Mo-transferase region spans residues 14-153; that stretch reads QIRVGVLTVS…LPGSKKGSQE (140 aa). The tract at residues 140–349 is interaction with GABARAP; that stretch reads LIINLPGSKK…VDITKVARRH (210 aa). Disordered stretches follow at residues 181–232 and 260–299; these read DELE…DSSS and TASL…SKGV. Pro residues predominate over residues 187–199; sequence PSPPPPLSPPPTT. Phosphoserine occurs at positions 188 and 194. Thr-198 carries the phosphothreonine modification. Position 200 is a phosphoserine (Ser-200). Cys-212 carries S-palmitoyl cysteine lipidation. The segment covering 261-286 has biased composition (polar residues); the sequence is ASLSTTPSESPRAQATSRLSTASCPT. At Ser-262 the chain carries Phosphoserine. Thr-265 and Thr-266 each carry phosphothreonine. Residues Ser-268 and Ser-270 each carry the phosphoserine modification. Cys-284 carries S-palmitoyl cysteine lipidation. The MPT adenylyltransferase stretch occupies residues 327–769; it reads SSKENILRAS…VVDVMVIGRL (443 aa). At Ser-338 the chain carries Phosphoserine.

This sequence in the N-terminal section; belongs to the MoaB/Mog family. It in the C-terminal section; belongs to the MoeA family. Homotrimer, homodimer and homooligomer. Interacts with SRGAP2 (via SH3 domain). Interacts with GLRB. Interacts with GABARAP. Interacts with GABRA3. GABRA3 and GLRB occupy overlapping binding sites. Interacts with ARHGAP32; IQSEC3, INSYN1 and INSYN2A. The cofactor is Mg(2+). Palmitoylated. Palmitoylation is stimulated by GABA type A receptors activity. Palmitoylation by ZDHHC12 regulates clustering at synapses.

It is found in the postsynaptic cell membrane. The protein localises to the cell membrane. Its subcellular location is the cytoplasm. The protein resides in the cytosol. It localises to the cytoskeleton. It is found in the cell projection. The protein localises to the dendrite. Its subcellular location is the postsynaptic density. It catalyses the reaction molybdopterin + ATP + H(+) = adenylyl-molybdopterin + diphosphate. The catalysed reaction is adenylyl-molybdopterin + molybdate = Mo-molybdopterin + AMP + H(+). Its pathway is cofactor biosynthesis; molybdopterin biosynthesis. With respect to regulation, inhibited by copper and tungsten. Microtubule-associated protein involved in membrane protein-cytoskeleton interactions. It is thought to anchor the inhibitory glycine receptor (GLYR) to subsynaptic microtubules. Acts as a major instructive molecule at inhibitory synapses, where it also clusters GABA type A receptors. Its function is as follows. Also has a catalytic activity and catalyzes two steps in the biosynthesis of the molybdenum cofactor. In the first step, molybdopterin is adenylated. Subsequently, molybdate is inserted into adenylated molybdopterin and AMP is released. The polypeptide is Gephyrin (Gphn) (Mus musculus (Mouse)).